The following is a 517-amino-acid chain: Phenol 2-monooxygenase, oxygenase component DmpN (517 aa).

6 residues coordinate Fe cation: glutamate 109, glutamate 139, histidine 142, glutamate 200, glutamate 234, and histidine 237.

This sequence belongs to the TmoA/XamoA family. The multicomponent enzyme phenol hydroxylase is formed by DmpL (P1 component), DmpM (P2 component), DmpN (P3 component), DmpO (P4 component) and DmpP (P5 component). The oxygenase component is a dimer composed of three subunits, DmpL, DmpN and DmpO (DmpLNO). DmpN interacts with the auxiliary protein DmpK (P0 component). It depends on Fe(2+) as a cofactor.

It catalyses the reaction phenol + NADH + O2 + H(+) = catechol + NAD(+) + H2O. It functions in the pathway aromatic compound metabolism; phenol degradation. Its activity is regulated as follows. Requires DmpM for efficient turnover. The activity of DmpLNO oxygenase is inhibited by dithiothreitol (DTT) by a mechanism apparently involving H(2)O(2) generation. Its function is as follows. Part of a multicomponent enzyme which catalyzes the degradation of phenol and some of its methylated derivatives. DmpL, DmpN and DmpO form the oxygenase component of the complex. Required for growth on phenol and for in vitro phenol hydroxylase activity. This is Phenol 2-monooxygenase, oxygenase component DmpN from Pseudomonas sp. (strain CF600).